A 514-amino-acid chain; its full sequence is Embryonic protein UVS.2 (514 aa).

Residues 1–19 form the signal peptide; that stretch reads MDVKISAILLACIIQYAVS. A Peptidase M12A domain is found at 90 to 286; it reads SAINDARFLW…SKINKLYECN (197 aa). Asparagine 112 is a glycosylation site (N-linked (GlcNAc...) asparagine). Disulfide bonds link cysteine 137–cysteine 285, cysteine 158–cysteine 178, cysteine 288–cysteine 314, cysteine 340–cysteine 363, cysteine 402–cysteine 428, and cysteine 455–cysteine 475. Histidine 186 is a Zn(2+) binding site. Residue glutamate 187 is part of the active site. The Zn(2+) site is built by histidine 190 and histidine 196. Residue asparagine 199 is glycosylated (N-linked (GlcNAc...) asparagine). 2 consecutive CUB domains span residues 288-400 and 402-513; these read CSNL…YGSI and CGGA…YTFV. N-linked (GlcNAc...) asparagine glycans are attached at residues asparagine 421, asparagine 427, and asparagine 464.

Zn(2+) is required as a cofactor.

The sequence is that of Embryonic protein UVS.2 from Xenopus laevis (African clawed frog).